The following is a 271-amino-acid chain: MDDSEEIAPAVQSILDAARERGGGGDRVSVTPKSLPDAFEAAADAGRTPVVAEIKPTSPTADGERADDPVDLAQQMVEGGAAALSVLTEPDHFGGSTATLERVREAVDVPVLRKDFILHENQLDVVEADVILLIVRFLEADGTDDLADLLTAARERGFQVLVETHTAAEVEKALDAGADIIGVNNRDLGELAVDLGTFEAVAPDIPEDVTLIAESGIQTADDVTRMRDAGADALLIGSAIMDHDAATDVEANTRRLTRANTDAVETTTTDT.

It belongs to the TrpC family.

It carries out the reaction 1-(2-carboxyphenylamino)-1-deoxy-D-ribulose 5-phosphate + H(+) = (1S,2R)-1-C-(indol-3-yl)glycerol 3-phosphate + CO2 + H2O. It participates in amino-acid biosynthesis; L-tryptophan biosynthesis; L-tryptophan from chorismate: step 4/5. This chain is Indole-3-glycerol phosphate synthase, found in Haloarcula marismortui (strain ATCC 43049 / DSM 3752 / JCM 8966 / VKM B-1809) (Halobacterium marismortui).